A 428-amino-acid chain; its full sequence is Homocitrate synthase, cytosolic isozyme (428 aa).

In terms of domain architecture, Pyruvate carboxyltransferase spans 23–276 (FQLIDSTLRE…KSKYKLHKIR (254 aa)). 2-oxoglutarate is bound at residue R31. E32 contacts Mg(2+). 2-oxoglutarate contacts are provided by H91, R151, and T185. Mg(2+) is bound by residues H212 and H214. H309 (proton acceptor) is an active-site residue. Position 385 is a phosphoserine (S385). Phosphothreonine is present on T396. The segment at 399–428 (VLSAKKNKKNDSDVPELATIPAAKRTKPSA) is disordered. 2 positions are modified to phosphoserine: S401 and S410.

The protein belongs to the alpha-IPM synthase/homocitrate synthase family. Homocitrate synthase LYS20/LYS21 subfamily. Mg(2+) serves as cofactor. The cofactor is Mn(2+).

The protein localises to the cytoplasm. The enzyme catalyses acetyl-CoA + 2-oxoglutarate + H2O = (2R)-homocitrate + CoA + H(+). The protein operates within amino-acid biosynthesis; L-lysine biosynthesis via AAA pathway; L-alpha-aminoadipate from 2-oxoglutarate: step 1/5. Functionally, catalyzes the aldol-type condensation of 2-oxoglutarate with acetyl-CoA to yield homocitrate. Carries out the first step of the alpha-aminoadipate (AAA) lysine biosynthesis pathway. This is Homocitrate synthase, cytosolic isozyme (LYS20) from Saccharomyces cerevisiae (strain ATCC 204508 / S288c) (Baker's yeast).